The primary structure comprises 324 residues: Beta-ketoacyl-[acyl-carrier-protein] synthase III (324 aa).

Active-site residues include cysteine 112 and histidine 249. The tract at residues 250–254 (QANIR) is ACP-binding. The active site involves asparagine 279.

Belongs to the thiolase-like superfamily. FabH family. In terms of assembly, homodimer.

The protein resides in the cytoplasm. It catalyses the reaction malonyl-[ACP] + acetyl-CoA + H(+) = 3-oxobutanoyl-[ACP] + CO2 + CoA. The protein operates within lipid metabolism; fatty acid biosynthesis. Its function is as follows. Catalyzes the condensation reaction of fatty acid synthesis by the addition to an acyl acceptor of two carbons from malonyl-ACP. Catalyzes the first condensation reaction which initiates fatty acid synthesis and may therefore play a role in governing the total rate of fatty acid production. Possesses both acetoacetyl-ACP synthase and acetyl transacylase activities. Its substrate specificity determines the biosynthesis of branched-chain and/or straight-chain of fatty acids. This Streptococcus sanguinis (strain SK36) protein is Beta-ketoacyl-[acyl-carrier-protein] synthase III.